The chain runs to 133 residues: Thioredoxin-like protein CXXS1 (133 aa).

The 120-residue stretch at Met1–Glu120 folds into the Thioredoxin domain.

This sequence belongs to the thioredoxin family.

In Oryza sativa subsp. japonica (Rice), this protein is Thioredoxin-like protein CXXS1.